Here is a 382-residue protein sequence, read N- to C-terminus: Mannitol-1-phosphate 5-dehydrogenase (382 aa).

3 to 14 (ALHFGAGNIGRG) serves as a coordination point for NAD(+).

It belongs to the mannitol dehydrogenase family.

The enzyme catalyses D-mannitol 1-phosphate + NAD(+) = beta-D-fructose 6-phosphate + NADH + H(+). The protein is Mannitol-1-phosphate 5-dehydrogenase of Salmonella agona (strain SL483).